Reading from the N-terminus, the 293-residue chain is Nucleotide-binding protein cauri_1197 (293 aa).

Residue 16–23 (GMSGGGLT) coordinates ATP. Residue 67–70 (DVRS) coordinates GTP.

Belongs to the RapZ-like family.

Its function is as follows. Displays ATPase and GTPase activities. This is Nucleotide-binding protein cauri_1197 from Corynebacterium aurimucosum (strain ATCC 700975 / DSM 44827 / CIP 107346 / CN-1) (Corynebacterium nigricans).